The following is a 201-amino-acid chain: Large ribosomal subunit protein uL4 (201 aa).

Residues 45–66 form a disordered region; sequence AQLTRSEVSGGGKKPWRQKGTG.

This sequence belongs to the universal ribosomal protein uL4 family. In terms of assembly, part of the 50S ribosomal subunit.

Its function is as follows. One of the primary rRNA binding proteins, this protein initially binds near the 5'-end of the 23S rRNA. It is important during the early stages of 50S assembly. It makes multiple contacts with different domains of the 23S rRNA in the assembled 50S subunit and ribosome. In terms of biological role, forms part of the polypeptide exit tunnel. This chain is Large ribosomal subunit protein uL4, found in Aeromonas salmonicida (strain A449).